A 114-amino-acid chain; its full sequence is Helper of Tim protein 13 (114 aa).

A CHY-type; degenerate zinc finger spans residues 10 to 90; it reads LVDKESRCEH…DSLQCPNCRS (81 aa). Residues C17, H19, C40, C43, C67, C70, C85, and C88 each coordinate Zn(2+).

Interacts with the small Tim proteins.

It is found in the mitochondrion intermembrane space. The protein resides in the mitochondrion membrane. Functionally, required for the assembly or recycling of the small Tim proteins in the mitochondrial intermembrane, thereby participating in the import and insertion of multi-pass transmembrane proteins into the mitochondrial inner membrane. This is Helper of Tim protein 13 (HOT13) from Kluyveromyces lactis (strain ATCC 8585 / CBS 2359 / DSM 70799 / NBRC 1267 / NRRL Y-1140 / WM37) (Yeast).